The following is a 255-amino-acid chain: Pyrroloquinoline-quinone synthase (255 aa).

It belongs to the PqqC family.

The enzyme catalyses 6-(2-amino-2-carboxyethyl)-7,8-dioxo-1,2,3,4,7,8-hexahydroquinoline-2,4-dicarboxylate + 3 O2 = pyrroloquinoline quinone + 2 H2O2 + 2 H2O + H(+). Its pathway is cofactor biosynthesis; pyrroloquinoline quinone biosynthesis. In terms of biological role, ring cyclization and eight-electron oxidation of 3a-(2-amino-2-carboxyethyl)-4,5-dioxo-4,5,6,7,8,9-hexahydroquinoline-7,9-dicarboxylic-acid to PQQ. This chain is Pyrroloquinoline-quinone synthase, found in Cereibacter sphaeroides (strain ATCC 17025 / ATH 2.4.3) (Rhodobacter sphaeroides).